The following is a 289-amino-acid chain: Acetyl-coenzyme A carboxylase carboxyl transferase subunit beta 2 (289 aa).

The 265-residue stretch at 25-289 (VWTKCPSCDQ…TNTSIRLEVK (265 aa)) folds into the CoA carboxyltransferase N-terminal domain. Positions 29, 32, 48, and 51 each coordinate Zn(2+). A C4-type zinc finger spans residues 29 to 51 (CPSCDQVLYRIALKENLEVCPKC).

It belongs to the AccD/PCCB family. Acetyl-CoA carboxylase is a heterohexamer composed of biotin carboxyl carrier protein (AccB), biotin carboxylase (AccC) and two subunits each of ACCase subunit alpha (AccA) and ACCase subunit beta (AccD). It depends on Zn(2+) as a cofactor.

It is found in the cytoplasm. The catalysed reaction is N(6)-carboxybiotinyl-L-lysyl-[protein] + acetyl-CoA = N(6)-biotinyl-L-lysyl-[protein] + malonyl-CoA. It participates in lipid metabolism; malonyl-CoA biosynthesis; malonyl-CoA from acetyl-CoA: step 1/1. Component of the acetyl coenzyme A carboxylase (ACC) complex. Biotin carboxylase (BC) catalyzes the carboxylation of biotin on its carrier protein (BCCP) and then the CO(2) group is transferred by the transcarboxylase to acetyl-CoA to form malonyl-CoA. The polypeptide is Acetyl-coenzyme A carboxylase carboxyl transferase subunit beta 2 (Vibrio parahaemolyticus serotype O3:K6 (strain RIMD 2210633)).